Consider the following 75-residue polypeptide: Putative DNA-directed RNA polymerase subunit omega (75 aa).

It belongs to the RNA polymerase subunit omega family.

It localises to the plastid. The protein localises to the chloroplast. The enzyme catalyses RNA(n) + a ribonucleoside 5'-triphosphate = RNA(n+1) + diphosphate. Its function is as follows. May be involved in RNA polymerase activity. In Mesostigma viride (Green alga), this protein is Putative DNA-directed RNA polymerase subunit omega (rpoZ).